The following is a 2944-amino-acid chain: Collagen alpha-1(VII) chain (2944 aa).

The signal sequence occupies residues 1–24; the sequence is MRLRLLVAALCAAEILMGAPEVWA. The nonhelical region (NC1) stretch occupies residues 18–1254; sequence GAPEVWAQPR…TGPCAVHCPK (1237 aa). The region spanning 39–212 is the VWFA 1 domain; sequence DIVFLLDGSS…SILRTLLPLI (174 aa). Fibronectin type-III domains follow at residues 235–330, 331–417, 418–508, 511–598, 601–688, 689–776, 779–867, 870–957, and 959–1053; these read GPRD…TAKE, GLEL…TASS, VEQT…LEQL, PVMN…DPEA, VVPG…DPLG, PVRR…APEP, SVSK…PPAT, LLET…EPSH, and PSTE…SHGP. Residue Asn338 is glycosylated (N-linked (GlcNAc...) asparagine). The N-linked (GlcNAc...) asparagine glycan is linked to Asn787. The VWFA 2 domain maps to 1055–1230; sequence DVVFLLHATR…PGLDRAVSDL (176 aa). The N-linked (GlcNAc...) asparagine glycan is linked to Asn1110. The Cell attachment site motif lies at 1171–1173; sequence RGD. An interrupted collagenous region region spans residues 1255–1475; it reads GQKGEPGVTG…GLRGAPGMTG (221 aa). Residues 1255 to 2775 form a triple-helical region region; that stretch reads GQKGEPGVTG…GPRGEKGEAA (1521 aa). Disordered regions lie at residues 1259-1934 and 1960-2773; these read EPGV…GSLP and SSGS…EKGE. A compositionally biased stretch (low complexity) spans 1338–1352; that stretch reads RGPQGPKGEPGEPGQ. A compositionally biased stretch (gly residues) spans 1353 to 1363; that stretch reads ITGGGGPGFPG. 2 stretches are compositionally biased toward basic and acidic residues: residues 1397-1406 and 1439-1448; these read KGDKGDRGER and PGEKGEKGDC. A compositionally biased stretch (low complexity) spans 1507 to 1518; the sequence is PGAAGHPGVEGP. 3 stretches are compositionally biased toward basic and acidic residues: residues 1527 to 1536, 1627 to 1639, and 1666 to 1680; these read RRGEKGEPGR, RGRDGEAGEKGDE, and VGEKGDQGDPGEDGR. Pro residues predominate over residues 1813-1822; that stretch reads PPGPPGPPGV. Basic and acidic residues-rich tracts occupy residues 1846–1855, 1862–1871, and 1968–1984; these read EDGRKGEKGD, EGPDGPKGER, and PERRPGPKGDPGDRGPP. Residues 2002–2004 carry the Cell attachment site motif; it reads RGD. The span at 2040-2049 shows a compositional bias: gly residues; sequence GRAGGSGEAG. The segment covering 2050–2068 has biased composition (basic and acidic residues); sequence RPGERGERGEKGERGDQGR. A Cell attachment site motif is present at residues 2063–2065; the sequence is RGD. Positions 2074–2083 are enriched in pro residues; that stretch reads LPGPPGPPGP. The segment covering 2130–2140 has biased composition (basic and acidic residues); sequence DVGEPGKRGHD. A 4-hydroxyproline mark is found at Pro2158, Pro2167, Pro2176, and Pro2179. 4 stretches are compositionally biased toward low complexity: residues 2182-2197, 2226-2241, 2279-2299, and 2306-2317; these read PGLAGPAGPQGPSGLK, SGLVGPQGSPGLPGQV, PKGEPGPVGAPGQVVVGPPGA, and PGDLAGALLGEP. Positions 2319–2335 are enriched in basic and acidic residues; that stretch reads AKGDRGLPGPRGEKGEA. The span at 2414–2427 shows a compositional bias: low complexity; sequence ERGLAGPPGREGAP. 2 stretches are compositionally biased toward basic and acidic residues: residues 2462–2477 and 2525–2544; these read RGERGEPGVRGEDGHP and AKGDMGERGPRGIDGDKGPR. The span at 2576–2594 shows a compositional bias: low complexity; sequence PKGEPGAAGIPGEPGAPGK. Positions 2601–2603 match the Cell attachment site motif; sequence RGD. Over residues 2615 to 2636 the composition is skewed to basic and acidic residues; sequence LKGEKGIKGTCGRDGERGDKGE. A 5-hydroxylysine mark is found at Lys2616 and Lys2622. The Cell attachment site signature appears at 2631-2633; the sequence is RGD. Pro2655, Pro2658, and Pro2664 each carry 4-hydroxyproline. Residues 2695–2704 are compositionally biased toward gly residues; sequence GPPGVGGFPG. Positions 2776 to 2944 are nonhelical region (NC2); it reads LTEDDIRDFV…GVHSQKTGAA (169 aa). Positions 2879–2931 constitute a BPTI/Kunitz inhibitor domain; sequence CSLPLDEGSCTAYTLRWYHRAVPGGTACHPFVYGGCGGNANRFGTREACERRC. Intrachain disulfides connect Cys2879/Cys2931, Cys2888/Cys2914, and Cys2906/Cys2927.

In terms of assembly, homotrimer. Interacts with MIA3/TANGO1; facilitating its loading into transport carriers and subsequent secretion. Prolines at the third position of the tripeptide repeating unit (G-X-Y) are hydroxylated in some or all of the chains.

It localises to the secreted. It is found in the extracellular space. Its subcellular location is the extracellular matrix. The protein localises to the basement membrane. In terms of biological role, stratified squamous epithelial basement membrane protein that forms anchoring fibrils which may contribute to epithelial basement membrane organization and adherence by interacting with extracellular matrix (ECM) proteins such as type IV collagen. The polypeptide is Collagen alpha-1(VII) chain (Mus musculus (Mouse)).